The sequence spans 203 residues: Small ribosomal subunit protein uS3 (203 aa).

This sequence belongs to the universal ribosomal protein uS3 family. In terms of assembly, part of the 30S ribosomal subunit. Forms a tight complex with proteins S10 and S14.

In terms of biological role, binds the lower part of the 30S subunit head. Binds mRNA in the 70S ribosome, positioning it for translation. The polypeptide is Small ribosomal subunit protein uS3 (Carsonella ruddii (strain PV)).